Reading from the N-terminus, the 174-residue chain is ATP synthase subunit b (174 aa).

Residues Leu-9 to Leu-29 traverse the membrane as a helical segment.

This sequence belongs to the ATPase B chain family. In terms of assembly, F-type ATPases have 2 components, F(1) - the catalytic core - and F(0) - the membrane proton channel. F(1) has five subunits: alpha(3), beta(3), gamma(1), delta(1), epsilon(1). F(0) has three main subunits: a(1), b(2) and c(10-14). The alpha and beta chains form an alternating ring which encloses part of the gamma chain. F(1) is attached to F(0) by a central stalk formed by the gamma and epsilon chains, while a peripheral stalk is formed by the delta and b chains.

It is found in the cell membrane. F(1)F(0) ATP synthase produces ATP from ADP in the presence of a proton or sodium gradient. F-type ATPases consist of two structural domains, F(1) containing the extramembraneous catalytic core and F(0) containing the membrane proton channel, linked together by a central stalk and a peripheral stalk. During catalysis, ATP synthesis in the catalytic domain of F(1) is coupled via a rotary mechanism of the central stalk subunits to proton translocation. In terms of biological role, component of the F(0) channel, it forms part of the peripheral stalk, linking F(1) to F(0). The sequence is that of ATP synthase subunit b from Rubrobacter xylanophilus (strain DSM 9941 / JCM 11954 / NBRC 16129 / PRD-1).